The following is a 175-amino-acid chain: Lipoprotein signal peptidase (175 aa).

The next 4 helical transmembrane spans lie at 25-45 (LWMA…IVIV), 56-76 (VTGF…SFLA), 81-101 (WQRW…VWLL), and 110-130 (FCFA…DRVV). Active-site residues include D136 and D154. Residues 146-166 (HWPAFNVADCAITVGAVLLIV) traverse the membrane as a helical segment.

It belongs to the peptidase A8 family.

The protein localises to the cell inner membrane. The enzyme catalyses Release of signal peptides from bacterial membrane prolipoproteins. Hydrolyzes -Xaa-Yaa-Zaa-|-(S,diacylglyceryl)Cys-, in which Xaa is hydrophobic (preferably Leu), and Yaa (Ala or Ser) and Zaa (Gly or Ala) have small, neutral side chains.. The protein operates within protein modification; lipoprotein biosynthesis (signal peptide cleavage). This protein specifically catalyzes the removal of signal peptides from prolipoproteins. The protein is Lipoprotein signal peptidase of Cupriavidus necator (strain ATCC 17699 / DSM 428 / KCTC 22496 / NCIMB 10442 / H16 / Stanier 337) (Ralstonia eutropha).